Here is a 395-residue protein sequence, read N- to C-terminus: Glyceraldehyde-3-phosphate dehydrogenase, testis-specific (395 aa).

Residues 1–60 (MSKRDIVLTNVTVVQLLRQPCPEPRVEAEPEPPAQPQPQPEPIKEEVPPPPPPPPAPKKV) form a testis-specific N-terminal extension region. The interval 19–59 (QPCPEPRVEAEPEPPAQPQPQPEPIKEEVPPPPPPPPAPKK) is disordered. 2 stretches are compositionally biased toward pro residues: residues 31-41 (EPPAQPQPQPE) and 48-57 (PPPPPPPPAP). Residues 72–73 (RI), Asp-93, and Lys-138 each bind NAD(+). Residues 210–212 (SCT), Thr-241, 270–271 (TG), and Arg-293 each bind D-glyceraldehyde 3-phosphate. Residue Cys-211 is the Nucleophile of the active site. Asn-375 serves as a coordination point for NAD(+).

It belongs to the glyceraldehyde-3-phosphate dehydrogenase family. As to quaternary structure, homotetramer.

It is found in the cytoplasm. The enzyme catalyses D-glyceraldehyde 3-phosphate + phosphate + NAD(+) = (2R)-3-phospho-glyceroyl phosphate + NADH + H(+). It functions in the pathway carbohydrate degradation; glycolysis; pyruvate from D-glyceraldehyde 3-phosphate: step 1/5. Its function is as follows. May play an important role in regulating the switch between different pathways for energy production during spermiogenesis and in the spermatozoon. Required for sperm motility and male fertility. In Bos taurus (Bovine), this protein is Glyceraldehyde-3-phosphate dehydrogenase, testis-specific (GAPDHS).